The chain runs to 176 residues: Ferritin, middle subunit (176 aa).

The Ferritin-like diiron domain maps to 7-156 (QNYHHDCERA…DHITNLTKMD (150 aa)). 5 residues coordinate Fe cation: E24, E59, H62, E104, and Q138.

It belongs to the ferritin family. Oligomer of 24 subunits. There are at least two types of subunits. The functional molecule forms a roughly spherical shell with a diameter of 12 nm and contains a central cavity into which the insoluble mineral iron core is deposited. As to expression, almost exclusively in the gonads.

It carries out the reaction 4 Fe(2+) + O2 + 4 H(+) = 4 Fe(3+) + 2 H2O. In terms of biological role, stores iron in a soluble, non-toxic, readily available form. Important for iron homeostasis. Has ferroxidase activity. Iron is taken up in the ferrous form and deposited as ferric hydroxides after oxidation. The sequence is that of Ferritin, middle subunit from Salmo salar (Atlantic salmon).